The primary structure comprises 368 residues: C6 finger domain transcription factor tcpZ (368 aa).

Positions cysteine 30–cysteine 56 form a DNA-binding region, zn(2)-C6 fungal-type. Residues phenylalanine 84–alanine 109 form a disordered region.

The protein localises to the nucleus. In terms of biological role, transcription factor that specifically regulates the thioclapurine biosynthesis gene cluster. The chain is C6 finger domain transcription factor tcpZ from Claviceps purpurea (strain 20.1) (Ergot fungus).